Here is a 1598-residue protein sequence, read N- to C-terminus: Fatty acid synthase subunit alpha (1598 aa).

The disordered stretch occupies residues 96–134; it reads RTQPHKSSAPQEPVPKAAPKAAPPVPVATAPLPEPGRQV. The span at 104 to 115 shows a compositional bias: low complexity; the sequence is APQEPVPKAAPK. The 79-residue stretch at 143-221 folds into the Carrier domain; that stretch reads DVPIQSRDVI…QIVSGSTSTT (79 aa). Ser181 is modified (O-(pantetheine 4'-phosphoryl)serine). The ketoreductase (KR) domain stretch occupies residues 543-784; the sequence is LKGKTVLLTG…LAALLVNPFA (242 aa). Positions 818–844 are disordered; sequence KQDSTSTPTHQHLPSHHHVDEPEIGKP. The segment covering 820–829 has biased composition (polar residues); the sequence is DSTSTPTHQH. A Ketosynthase family 3 (KS3) domain is found at 992–1524; the sequence is HEIVLTRDLA…QKGAQAIIVH (533 aa). Cys1175 (for beta-ketoacyl synthase activity) is an active-site residue. A disordered region spans residues 1280-1301; that stretch reads ASDKTGRSVPSPGKGTLTNARE. Residues His1409 and His1450 each act as for beta-ketoacyl synthase activity in the active site.

This sequence belongs to the thiolase-like superfamily. Fungal fatty acid synthetase subunit alpha family. Fatty acid synthase is composed of alpha and beta subunits.

It catalyses the reaction acetyl-CoA + n malonyl-CoA + 2n NADPH + 4n H(+) = a long-chain-acyl-CoA + n CoA + n CO2 + 2n NADP(+).. The catalysed reaction is a fatty acyl-[ACP] + malonyl-[ACP] + H(+) = a 3-oxoacyl-[ACP] + holo-[ACP] + CO2. It carries out the reaction a (3R)-hydroxyacyl-[ACP] + NADP(+) = a 3-oxoacyl-[ACP] + NADPH + H(+). It participates in mycotoxin biosynthesis. Its function is as follows. Fatty acid synthase subunit alpha; part of the gene cluster that mediates the biosynthesis of gramillins A and B, bicyclic lipopeptides that induce cell death in maize leaves but not in wheat leaves. The nonribosomal peptide synthetase GRA1 incorporates respectively a glutamic adic (Glu), a leucine (Leu), a serine (Ser), a hydroxyglutamine (HOGln), a 2-amino decanoic acid, and 2 cysteins (CysB and CysA). The biosynthesis of 2-amino decanoic acid incorporated in gramillins could be initiated by a fatty acid synthase composed of the alpha and beta subunits FGSG_00036 and FGSG_11656. The cytochrome P450 monooxygenase FGSG_15680 could hydroxylate the fatty acid chain. Subsequent oxidation to the ketone by the oxidoreductase FGSG_00048 and transamination by aminotransferase FGSG_00049 could form 2-amino-decanoic acid. On the other hand, FGSG_15680 could also be responsible for the HO-modified glutamine at the gamma-position. Whether hydroxylation occurs on the fully assembled product or on the Gln residue prior to assembly into the gramillins requires further proof. The thioredoxin FGSG_00043 could also be required for the disulfide-bond formation between CysA and CysB. The specific involvement of the remaining proteins from the cluster is more difficult to discern, but could have broader regulatory (FGSG_00040 and FGSG_11657) or enzymatic functions (FGSG_00044 and FGSG_00045). The final C-domain of GRA1 does not possess the expected sequence of a termination CT domain, often implicated in macrocyclization and release of a cyclopeptidein fungal NRPs; and the thioesterase FGSG_00047 may act in concert with the terminal C-domain of GRA1 to catalyze the formation of the macrocyclic anhydride and release of the products. This Gibberella zeae (strain ATCC MYA-4620 / CBS 123657 / FGSC 9075 / NRRL 31084 / PH-1) (Wheat head blight fungus) protein is Fatty acid synthase subunit alpha.